A 2282-amino-acid chain; its full sequence is Cation channel sperm-associated targeting subunit tau (2282 aa).

Residues 1-118 (MELPPPGNRR…RGKGKGTGTR (118 aa)) are disordered. 2 stretches are compositionally biased toward polar residues: residues 11–41 (VSINNPQETSGRVPTTSAGFPTQSSKISLKR) and 50–87 (MMSNRSSGGQSLLPSSILQKTSLNPPGSLQSKPSNLSS). The segment covering 90–109 (YADEEGKPLTDKNKDKDKGR) has biased composition (basic and acidic residues). Positions 131–266 (QSDEMAIANQ…IQKGCFTEVM (136 aa)) constitute a C2 domain. Disordered stretches follow at residues 397 to 416 (MTKRDNKGSSIPSESNSSAL), 656 to 679 (EHEDQDPPYPGHSGSAGSDATWAE), 747 to 1066 (NKLI…SHDP), 1104 to 1153 (SAKS…DKQS), 1217 to 1240 (YTNDEGYSPPPSVHSRPSDSTDDR), 1426 to 1445 (NSLLDSQTTSSTEQYSDSRS), 1452 to 1515 (RQNT…SLDK), 1542 to 1569 (ERRQQPEKDSESLIKHSSSSGSEHLEKT), 1908 to 1928 (NQANPLTRSPERPSDISLKKQ), and 2187 to 2222 (PKKSKSGARLLGKSPEDSHNQAKHCARPYTAPEPNK). Composition is skewed to polar residues over residues 750–760 (ITDSSFNTTKP), 783–792 (SDPSSNTTKP), 800–841 (DPSS…SDLN), 849–858 (IVSTISSDPN), and 953–974 (SARSSDPNKLSRDPSINSTKLS). Residues 1104 to 1123 (SAKSLDSNNSSASSSPTVNS) show a composition bias toward low complexity. The span at 1124–1136 (DTTTNAAEPSGTK) shows a compositional bias: polar residues. Polar residues-rich tracts occupy residues 1452–1466 (RQNTSSINPLDSSVS) and 1473–1482 (DCQSISTQES). Basic and acidic residues predominate over residues 1484–1493 (YPVRDTKSDS). Positions 1495 to 1504 (NDTEEMELDS) are enriched in acidic residues. Basic and acidic residues-rich tracts occupy residues 1542–1555 (ERRQQPEKDSESLI) and 1916–1925 (SPERPSDISL).

Component of the CatSper complex or CatSpermasome composed of the core pore-forming members CATSPER1, CATSPER2, CATSPER3 and CATSPER4 as well as auxiliary members CATSPERB, CATSPERG, CATSPERD, CATSPERE, CATSPERZ, C2CD6/CATSPERT, SLCO6C1, TMEM249, TMEM262 and EFCAB9. HSPA1 may be an additional auxiliary complex member. The core complex members CATSPER1, CATSPER2, CATSPER3 and CATSPER4 form a heterotetrameric channel. The auxiliary CATSPERB, CATSPERG, CATSPERD and CATSPERE subunits form a pavilion-like structure over the pore which stabilizes the complex through interactions with CATSPER4, CATSPER3, CATSPER1 and CATSPER2 respectively. SLCO6C1 interacts with CATSPERE and TMEM262/CATSPERH interacts with CATSPERB, further stabilizing the complex. C2CD6/CATSPERT interacts at least with CATSPERD and is required for targeting the CatSper complex in the flagellar membrane. As to expression, expressed in cauda sperm (at protein level).

The protein resides in the cell projection. The protein localises to the cilium. It is found in the flagellum membrane. Auxiliary component of the CatSper complex, a complex involved in sperm cell hyperactivation. Sperm cell hyperactivation is needed for sperm motility which is essential late in the preparation of sperm for fertilization. Required for CatSper complex targeting and trafficking into the quadrilinear nanodomains. Targets the preassembled CatSper complexes to elongating flagella, where it links the channel-carrying vesicles and motor proteins. This chain is Cation channel sperm-associated targeting subunit tau, found in Mus musculus (Mouse).